A 901-amino-acid polypeptide reads, in one-letter code: MLGLGTLAKKVFGTPNDRKIKATRPVVAQINALEEEFAKLTDEGLKQKTDELRKRALDGESLDALLPEAFANCREAGKRALGLRAFDTQLMGGIFLHQGNISEMKTGEGKTLVATFPAYLNALTGKGVHVVTVNEYLAKRDSEWMGKVFAALGMTTGVIWSGQPDAEKMAAYESDITYATNNELGFDYLRDNMKGELSEVYQKQHNFAIVDEVDSILIDEARTPLIISGPAQDRSDLYVAIDALLPALSDDHFELDEKTRNVTFTDEGNEFLEAQLVARGLLPEGQSLYDPESTTIVHHVNQGLRAHKLFQRDKDYIVRDGEVVLIDEFTGRMMPGRRLSDGLHQAIEAKENAQIQPENVTLASVTFQNYFRLYDKLSGMTGTALTEAEEFAEIYGLGVVEVPTNRPIARTDEDDQVYRTAAEKYGAMIDETKKAHEKGQPVLLGTTSIEKSEMLSQMLTKEGIEHNVLNARQHEREAQIVAEAGRYGAVTIATNMAGRGTDIQLGGNVEMKVLEALAENPEADPVELRAAEEARHAEEKQKVLDAGGLYVMASERHESRRIDNQLRGRSGRQGDPGRTVFYLSLEDDLMRIFGSERLDKVLTTLGMKEGEAIIHPWVNKSLERAQAKVEGRNFDMRKNVLKFDDVMNDQRKVIFNQRREIMATEDLSDVVADMREQVIDDLIDEYMPPKTYADQWDTQGLYAAVIEKLGIDVPVIEWAAEEGVDDDEIRERLIKASGDYMESKAADFGAENMRNIEKQVLLQTIDSKWREHLLKLEHLRSVVGFRGYAQRDPLNEYKTESFQLFEGLLDSLRETVTQQLSRVRMLSEEEQRQMMAQMMAQQNQAEQAAVQAEAVAEAKASGDARPGFVEDDPSTWGNPARNDLCPCGSGKKFKHCHGRLA.

Residues glutamine 89, 107-111, and aspartate 502 each bind ATP; that span reads GEGKT. Residues 856 to 875 are disordered; that stretch reads AEAKASGDARPGFVEDDPST. Positions 885, 887, 896, and 897 each coordinate Zn(2+).

Belongs to the SecA family. Monomer and homodimer. Part of the essential Sec protein translocation apparatus which comprises SecA, SecYEG and auxiliary proteins SecDF-YajC and YidC. Requires Zn(2+) as cofactor.

It localises to the cell inner membrane. Its subcellular location is the cytoplasm. The catalysed reaction is ATP + H2O + cellular proteinSide 1 = ADP + phosphate + cellular proteinSide 2.. Its function is as follows. Part of the Sec protein translocase complex. Interacts with the SecYEG preprotein conducting channel. Has a central role in coupling the hydrolysis of ATP to the transfer of proteins into and across the cell membrane, serving both as a receptor for the preprotein-SecB complex and as an ATP-driven molecular motor driving the stepwise translocation of polypeptide chains across the membrane. This is Protein translocase subunit SecA 1 from Ruegeria pomeroyi (strain ATCC 700808 / DSM 15171 / DSS-3) (Silicibacter pomeroyi).